Reading from the N-terminus, the 68-residue chain is Large ribosomal subunit protein uL29 (68 aa).

The protein belongs to the universal ribosomal protein uL29 family.

The polypeptide is Large ribosomal subunit protein uL29 (Parvibaculum lavamentivorans (strain DS-1 / DSM 13023 / NCIMB 13966)).